Reading from the N-terminus, the 170-residue chain is Adenine phosphoribosyltransferase (170 aa).

This sequence belongs to the purine/pyrimidine phosphoribosyltransferase family. As to quaternary structure, homodimer.

Its subcellular location is the cytoplasm. The catalysed reaction is AMP + diphosphate = 5-phospho-alpha-D-ribose 1-diphosphate + adenine. The protein operates within purine metabolism; AMP biosynthesis via salvage pathway; AMP from adenine: step 1/1. Catalyzes a salvage reaction resulting in the formation of AMP, that is energically less costly than de novo synthesis. The polypeptide is Adenine phosphoribosyltransferase (Lactococcus lactis subsp. cremoris (strain MG1363)).